Reading from the N-terminus, the 420-residue chain is Protein TabA (420 aa).

At Lys-57 the chain carries N6-(pyridoxal phosphate)lysine.

The protein belongs to the Orn/Lys/Arg decarboxylase class-II family. The cofactor is pyridoxal 5'-phosphate.

Involved in tabtoxin production and pathogenicity. The protein is Protein TabA (tabA) of Pseudomonas amygdali pv. tabaci (Pseudomonas syringae pv. tabaci).